The primary structure comprises 370 residues: sn-glycerol-3-phosphate import ATP-binding protein UgpC (370 aa).

An ABC transporter domain is found at 4–236; it reads LSLKNIAKRY…PATAFVAAFM (233 aa). An ATP-binding site is contributed by 38-45; the sequence is GPSGCGKS.

The protein belongs to the ABC transporter superfamily. sn-glycerol-3-phosphate importer (TC 3.A.1.1.3) family. As to quaternary structure, the complex is composed of two ATP-binding proteins (UgpC), two transmembrane proteins (UgpA and UgpE) and a solute-binding protein (UgpB).

Its subcellular location is the cell inner membrane. The enzyme catalyses sn-glycerol 3-phosphate(out) + ATP + H2O = sn-glycerol 3-phosphate(in) + ADP + phosphate + H(+). Part of the ABC transporter complex UgpBAEC involved in sn-glycerol-3-phosphate (G3P) import. Responsible for energy coupling to the transport system. The polypeptide is sn-glycerol-3-phosphate import ATP-binding protein UgpC (Chromobacterium violaceum (strain ATCC 12472 / DSM 30191 / JCM 1249 / CCUG 213 / NBRC 12614 / NCIMB 9131 / NCTC 9757 / MK)).